The following is a 537-amino-acid chain: Arginine--tRNA ligase (537 aa).

The 'HIGH' region signature appears at 113-123 (ANPTGELHLGH).

The protein belongs to the class-I aminoacyl-tRNA synthetase family. As to quaternary structure, monomer.

The protein localises to the cytoplasm. The enzyme catalyses tRNA(Arg) + L-arginine + ATP = L-arginyl-tRNA(Arg) + AMP + diphosphate. The sequence is that of Arginine--tRNA ligase (argS) from Mycoplasma pneumoniae (strain ATCC 29342 / M129 / Subtype 1) (Mycoplasmoides pneumoniae).